The primary structure comprises 301 residues: MFGWHWLLEWQTPYEFHGHLIEKVFAEEKTPYQHVTLVEFTRFGKGLIIDGKVQSTLYDEHIYHELLVHPLLLSLPKPPKNVLILGGGEGATLREVLKYKSVEKAVMVDIDEKVIEFAKKYLYEWHQGAFEDKRTSLVITDGLKFINETKDKYDAIILDLTDPIKDSTSYMLYTKEFYEKLRGILNQGGGIVTQATSPSFSLEVYVTIYNTIKEVFKEASASYTYMASFDGLWGFVYGGVRPDLLSEDEVNSRIRERISGQLRFYDDYSHKISFSLPKNIKSEFKKITKVSTEKDPIYVPA.

The 237-residue stretch at 4–240 (WHWLLEWQTP…GLWGFVYGGV (237 aa)) folds into the PABS domain. Gln-33 is a binding site for S-methyl-5'-thioadenosine. Positions 64 and 89 each coordinate spermidine. Residues Asp-109 and 141–142 (DG) each bind S-methyl-5'-thioadenosine. Asp-159 serves as the catalytic Proton acceptor.

Belongs to the spermidine/spermine synthase family. Homodimer or homotetramer.

Its subcellular location is the cytoplasm. The enzyme catalyses S-adenosyl 3-(methylsulfanyl)propylamine + putrescine = S-methyl-5'-thioadenosine + spermidine + H(+). Its pathway is amine and polyamine biosynthesis; spermidine biosynthesis; spermidine from putrescine: step 1/1. Its function is as follows. Catalyzes the irreversible transfer of a propylamine group from the amino donor S-adenosylmethioninamine (decarboxy-AdoMet) to putrescine (1,4-diaminobutane) to yield spermidine. In Saccharolobus islandicus (strain L.S.2.15 / Lassen #1) (Sulfolobus islandicus), this protein is Polyamine aminopropyltransferase.